A 424-amino-acid chain; its full sequence is Riboflavin biosynthesis protein RibBA (424 aa).

A DHBP synthase region spans residues 1-206 (MFTCEAGIAS…VDDLITYRYT (206 aa)). D-ribulose 5-phosphate contacts are provided by residues 32-33 (RE), aspartate 37, 145-149 (RPGHT), and glutamate 169. Glutamate 33 provides a ligand contact to Mg(2+). Histidine 148 is a binding site for Mg(2+). Residues 207-424 (YDSLVTKISS…YETVERMSCR (218 aa)) form a GTP cyclohydrolase II region. 257–261 (RVHSE) is a binding site for GTP. Residues cysteine 262, cysteine 273, and cysteine 275 each contribute to the Zn(2+) site. Residues glutamine 278, 301-303 (EGR), and threonine 323 each bind GTP. Catalysis depends on aspartate 335, which acts as the Proton acceptor; for GTP cyclohydrolase activity. Arginine 337 acts as the Nucleophile; for GTP cyclohydrolase activity in catalysis. GTP is bound by residues threonine 358 and lysine 363.

In the N-terminal section; belongs to the DHBP synthase family. The protein in the C-terminal section; belongs to the GTP cyclohydrolase II family. The cofactor is Mg(2+). Mn(2+) serves as cofactor. Zn(2+) is required as a cofactor.

The enzyme catalyses D-ribulose 5-phosphate = (2S)-2-hydroxy-3-oxobutyl phosphate + formate + H(+). It catalyses the reaction GTP + 4 H2O = 2,5-diamino-6-hydroxy-4-(5-phosphoribosylamino)-pyrimidine + formate + 2 phosphate + 3 H(+). The protein operates within cofactor biosynthesis; riboflavin biosynthesis; 2-hydroxy-3-oxobutyl phosphate from D-ribulose 5-phosphate: step 1/1. It functions in the pathway cofactor biosynthesis; riboflavin biosynthesis; 5-amino-6-(D-ribitylamino)uracil from GTP: step 1/4. Catalyzes the conversion of D-ribulose 5-phosphate to formate and 3,4-dihydroxy-2-butanone 4-phosphate. In terms of biological role, catalyzes the conversion of GTP to 2,5-diamino-6-ribosylamino-4(3H)-pyrimidinone 5'-phosphate (DARP), formate and pyrophosphate. The protein is Riboflavin biosynthesis protein RibBA of Chlamydia trachomatis serovar D (strain ATCC VR-885 / DSM 19411 / UW-3/Cx).